The chain runs to 281 residues: Bifunctional protein FolD (281 aa).

Residues 165-167, threonine 192, and valine 233 contribute to the NADP(+) site; that span reads GRG.

It belongs to the tetrahydrofolate dehydrogenase/cyclohydrolase family. Homodimer.

The enzyme catalyses (6R)-5,10-methylene-5,6,7,8-tetrahydrofolate + NADP(+) = (6R)-5,10-methenyltetrahydrofolate + NADPH. It catalyses the reaction (6R)-5,10-methenyltetrahydrofolate + H2O = (6R)-10-formyltetrahydrofolate + H(+). The protein operates within one-carbon metabolism; tetrahydrofolate interconversion. Catalyzes the oxidation of 5,10-methylenetetrahydrofolate to 5,10-methenyltetrahydrofolate and then the hydrolysis of 5,10-methenyltetrahydrofolate to 10-formyltetrahydrofolate. The sequence is that of Bifunctional protein FolD from Mycobacterium ulcerans (strain Agy99).